Reading from the N-terminus, the 320-residue chain is Ferrochelatase (320 aa).

Positions 194 and 275 each coordinate Fe cation.

Belongs to the ferrochelatase family. In terms of assembly, monomer.

It localises to the cytoplasm. The catalysed reaction is heme b + 2 H(+) = protoporphyrin IX + Fe(2+). It functions in the pathway porphyrin-containing compound metabolism; protoheme biosynthesis; protoheme from protoporphyrin-IX: step 1/1. Functionally, catalyzes the ferrous insertion into protoporphyrin IX. The chain is Ferrochelatase from Escherichia coli O139:H28 (strain E24377A / ETEC).